The chain runs to 158 residues: NAD(P)H-quinone oxidoreductase subunit N (158 aa).

This sequence belongs to the complex I NdhN subunit family. As to quaternary structure, NDH-1 can be composed of about 15 different subunits; different subcomplexes with different compositions have been identified which probably have different functions.

The protein resides in the cellular thylakoid membrane. The enzyme catalyses a plastoquinone + NADH + (n+1) H(+)(in) = a plastoquinol + NAD(+) + n H(+)(out). It catalyses the reaction a plastoquinone + NADPH + (n+1) H(+)(in) = a plastoquinol + NADP(+) + n H(+)(out). Functionally, NDH-1 shuttles electrons from an unknown electron donor, via FMN and iron-sulfur (Fe-S) centers, to quinones in the respiratory and/or the photosynthetic chain. The immediate electron acceptor for the enzyme in this species is believed to be plastoquinone. Couples the redox reaction to proton translocation, and thus conserves the redox energy in a proton gradient. Cyanobacterial NDH-1 also plays a role in inorganic carbon-concentration. The chain is NAD(P)H-quinone oxidoreductase subunit N from Trichodesmium erythraeum (strain IMS101).